The primary structure comprises 142 residues: Large-conductance mechanosensitive channel (142 aa).

3 helical membrane-spanning segments follow: residues 15-35 (AFVM…GAAF), 38-58 (IVTS…IGNI), and 82-102 (GMFI…FVAI).

This sequence belongs to the MscL family. Homopentamer.

It is found in the cell inner membrane. Channel that opens in response to stretch forces in the membrane lipid bilayer. May participate in the regulation of osmotic pressure changes within the cell. The sequence is that of Large-conductance mechanosensitive channel from Fusobacterium nucleatum subsp. nucleatum (strain ATCC 25586 / DSM 15643 / BCRC 10681 / CIP 101130 / JCM 8532 / KCTC 2640 / LMG 13131 / VPI 4355).